The following is a 199-amino-acid chain: MYYPEPLNKLITALGRLPGIGPKTAQRLAFHLLKVPASEARDLAAAILEARQKTIYCSICGNFTDRDPCRLCSDPERDHSCICVVEEARDIIALEKTRQYRGLYHVLQGAISPVDGIGPEQLRVKELLARLHDGKVKEVILATNADVEGESTALYLDKLLKTLGVKVTRLAYGLPVGGDLEYADEVTLARAFAGRHELE.

The segment at C57 to C72 adopts a C4-type zinc-finger fold. In terms of domain architecture, Toprim spans S80–P175.

This sequence belongs to the RecR family.

In terms of biological role, may play a role in DNA repair. It seems to be involved in an RecBC-independent recombinational process of DNA repair. It may act with RecF and RecO. This is Recombination protein RecR from Moorella thermoacetica (strain ATCC 39073 / JCM 9320).